The primary structure comprises 716 residues: Ubiquitin thioesterase zranb1-B (716 aa).

RanBP2-type zinc fingers lie at residues 3–33 (DLGLKWSCEYCTYENWPSAIKCTMCRAQRHN) and 82–111 (TSSKWSCHMCTYLNWPRAIRCTQCLSQRQQ). Residues C10, C13, C24, C27, C88, C91, C102, and C105 each contribute to the Zn(2+) site. The segment at 113–143 (SQQHSPLSPSETPQTSGSRPSPVTSDPCEEY) is disordered. Positions 118–136 (PLSPSETPQTSGSRPSPVT) are enriched in polar residues. The segment at 152-181 (HAQRWPCSACTYENWPKSLRCVVCDHPKPS) adopts a RanBP2-type 3 zinc-finger fold. Positions 158, 161, 172, and 175 each coordinate Zn(2+). Positions 178–228 (PKPSGSPETPQQDSEAESATSPSIVNEQERENVRTAGGGGGGSRGRLRKLS) are disordered. Residues 183 to 203 (SPETPQQDSEAESATSPSIVN) are compositionally biased toward polar residues. 2 ANK repeats span residues 268–298 (RRSDWLFLNACAGVVEGDLAAVEAYKSSGGD) and 321–348 (FTLVHLAIRFQRQDMLAVLLTEVSQQTA). Residues 440 to 600 (LYALWNRTAG…RGHFSALVAM (161 aa)) form the OTU domain. C451 acts as the Nucleophile in catalysis. H593 functions as the Proton acceptor in the catalytic mechanism.

This sequence belongs to the peptidase C64 family.

It localises to the cytoplasm. Its subcellular location is the nucleus. It carries out the reaction Thiol-dependent hydrolysis of ester, thioester, amide, peptide and isopeptide bonds formed by the C-terminal Gly of ubiquitin (a 76-residue protein attached to proteins as an intracellular targeting signal).. Functionally, ubiquitin thioesterase, which specifically hydrolyzes 'Lys-29'-linked and 'Lys-33'-linked diubiquitin. Also cleaves 'Lys-63'-linked chains, but with 40-fold less efficiency compared to 'Lys-29'-linked ones. Positive regulator of the Wnt signaling pathway that deubiquitinates apc protein, a negative regulator of Wnt-mediated transcription. Acts as a regulator of autophagy by mediating deubiquitination of pik3c3/vps34, thereby promoting autophagosome maturation. Plays a role in the regulation of cell morphology and cytoskeletal organization. Required in the stress fiber dynamics and cell migration. This Danio rerio (Zebrafish) protein is Ubiquitin thioesterase zranb1-B (zranb1b).